Consider the following 408-residue polypeptide: Putative transporter AmpG 2 (408 aa).

11 helical membrane-spanning segments follow: residues 11–31 (IFNI…YLLT), 49–69 (IGLF…GPLL), 84–104 (YCLV…TSFN), 110–130 (IPFV…DMLI), 154–174 (FRIG…IISW), 177–197 (VYRT…FYPL), 224–244 (CIVI…LSIM), 261–281 (VGYK…GGFL), 294–311 (VLIY…LYFL), 353–373 (IALI…ISGY), and 382–402 (YFFI…LYLP).

Belongs to the major facilitator superfamily.

The protein localises to the cell inner membrane. This chain is Putative transporter AmpG 2 (ampG2), found in Rickettsia prowazekii (strain Madrid E).